A 471-amino-acid polypeptide reads, in one-letter code: Glutamate--tRNA ligase 1 (471 aa).

A 'HIGH' region motif is present at residues 15-25 (PSPTGYLHIGG). Positions 243–247 (KLSKR) match the 'KMSKS' region motif. Lys246 contributes to the ATP binding site.

This sequence belongs to the class-I aminoacyl-tRNA synthetase family. Glutamate--tRNA ligase type 1 subfamily. In terms of assembly, monomer.

Its subcellular location is the cytoplasm. It carries out the reaction tRNA(Glu) + L-glutamate + ATP = L-glutamyl-tRNA(Glu) + AMP + diphosphate. Its function is as follows. Catalyzes the attachment of glutamate to tRNA(Glu) in a two-step reaction: glutamate is first activated by ATP to form Glu-AMP and then transferred to the acceptor end of tRNA(Glu). In Dinoroseobacter shibae (strain DSM 16493 / NCIMB 14021 / DFL 12), this protein is Glutamate--tRNA ligase 1.